Here is a 347-residue protein sequence, read N- to C-terminus: GMP reductase (347 aa).

Residue 108 to 131 (ADFEKTKQILAQSPALNFVCIDVA) coordinates NADP(+). Gly-181 and Gly-183 together coordinate K(+). Cys-186 (thioimidate intermediate) is an active-site residue. Position 216–239 (216–239 (IVSDGGCTMPGDVAKAFGGGADFV)) interacts with NADP(+).

Belongs to the IMPDH/GMPR family. GuaC type 1 subfamily. Homotetramer.

The enzyme catalyses IMP + NH4(+) + NADP(+) = GMP + NADPH + 2 H(+). Catalyzes the irreversible NADPH-dependent deamination of GMP to IMP. It functions in the conversion of nucleobase, nucleoside and nucleotide derivatives of G to A nucleotides, and in maintaining the intracellular balance of A and G nucleotides. This Citrobacter koseri (strain ATCC BAA-895 / CDC 4225-83 / SGSC4696) protein is GMP reductase.